Here is a 151-residue protein sequence, read N- to C-terminus: Acidic phospholipase A2 5 (151 aa).

The N-terminal stretch at methionine 1–leucine 27 is a signal peptide. 7 disulfide bridges follow: cysteine 38-cysteine 104, cysteine 54-cysteine 151, cysteine 56-cysteine 72, cysteine 71-cysteine 132, cysteine 78-cysteine 125, cysteine 88-cysteine 118, and cysteine 111-cysteine 123. Residues tyrosine 55, glycine 57, and glycine 59 each contribute to the Ca(2+) site. Histidine 75 is a catalytic residue. Residue aspartate 76 participates in Ca(2+) binding. Residue aspartate 126 is part of the active site.

It belongs to the phospholipase A2 family. Group I subfamily. D49 sub-subfamily. Ca(2+) serves as cofactor. As to expression, expressed by the venom gland.

The protein localises to the secreted. The catalysed reaction is a 1,2-diacyl-sn-glycero-3-phosphocholine + H2O = a 1-acyl-sn-glycero-3-phosphocholine + a fatty acid + H(+). In terms of biological role, PLA2 catalyzes the calcium-dependent hydrolysis of the 2-acyl groups in 3-sn-phosphoglycerides. This Tropidechis carinatus (Australian rough-scaled snake) protein is Acidic phospholipase A2 5.